The sequence spans 250 residues: Ubiquinone/menaquinone biosynthesis C-methyltransferase UbiE (250 aa).

S-adenosyl-L-methionine-binding positions include threonine 74, aspartate 94, 122–123 (DA), and serine 139.

This sequence belongs to the class I-like SAM-binding methyltransferase superfamily. MenG/UbiE family.

It carries out the reaction a 2-demethylmenaquinol + S-adenosyl-L-methionine = a menaquinol + S-adenosyl-L-homocysteine + H(+). The enzyme catalyses a 2-methoxy-6-(all-trans-polyprenyl)benzene-1,4-diol + S-adenosyl-L-methionine = a 5-methoxy-2-methyl-3-(all-trans-polyprenyl)benzene-1,4-diol + S-adenosyl-L-homocysteine + H(+). Its pathway is quinol/quinone metabolism; menaquinone biosynthesis; menaquinol from 1,4-dihydroxy-2-naphthoate: step 2/2. It participates in cofactor biosynthesis; ubiquinone biosynthesis. In terms of biological role, methyltransferase required for the conversion of demethylmenaquinol (DMKH2) to menaquinol (MKH2) and the conversion of 2-polyprenyl-6-methoxy-1,4-benzoquinol (DDMQH2) to 2-polyprenyl-3-methyl-6-methoxy-1,4-benzoquinol (DMQH2). The protein is Ubiquinone/menaquinone biosynthesis C-methyltransferase UbiE of Ruegeria sp. (strain TM1040) (Silicibacter sp.).